A 675-amino-acid chain; its full sequence is Methionine--tRNA ligase (675 aa).

A 'HIGH' region motif is present at residues 15–25 (PYANGSIHLGH). Cys-146, Cys-149, Cys-159, and Cys-162 together coordinate Zn(2+). The short motif at 332–336 (KMSKS) is the 'KMSKS' region element. ATP is bound at residue Lys-335. In terms of domain architecture, tRNA-binding spans 573 to 675 (DFAKVDMRIA…SGAQPGMQVK (103 aa)).

Belongs to the class-I aminoacyl-tRNA synthetase family. MetG type 1 subfamily. Homodimer. Zn(2+) serves as cofactor.

The protein resides in the cytoplasm. It catalyses the reaction tRNA(Met) + L-methionine + ATP = L-methionyl-tRNA(Met) + AMP + diphosphate. Is required not only for elongation of protein synthesis but also for the initiation of all mRNA translation through initiator tRNA(fMet) aminoacylation. The polypeptide is Methionine--tRNA ligase (Yersinia pestis bv. Antiqua (strain Angola)).